Here is a 408-residue protein sequence, read N- to C-terminus: Argininosuccinate synthase (408 aa).

Residues 10-18 and Ala-37 each bind ATP; that span reads AYSGGLDTS. L-citrulline contacts are provided by Tyr-90 and Ser-95. ATP is bound at residue Gly-120. L-aspartate is bound by residues Thr-122, Asn-126, and Asp-127. Asn-126 is a binding site for L-citrulline. L-citrulline contacts are provided by Arg-130, Ser-182, Ser-191, Glu-267, and Tyr-279.

This sequence belongs to the argininosuccinate synthase family. Type 1 subfamily. As to quaternary structure, homotetramer.

The protein localises to the cytoplasm. It carries out the reaction L-citrulline + L-aspartate + ATP = 2-(N(omega)-L-arginino)succinate + AMP + diphosphate + H(+). Its pathway is amino-acid biosynthesis; L-arginine biosynthesis; L-arginine from L-ornithine and carbamoyl phosphate: step 2/3. The protein is Argininosuccinate synthase of Paraburkholderia xenovorans (strain LB400).